We begin with the raw amino-acid sequence, 651 residues long: MKLEMSSYLHKVPNTGITNLSNSKSIVFIMFCATLLFIITSSRYLTGSESLGQIPSEIPKSSEQLNEELSQQINSKLHKLASFDKFNSFPLLNKHMKDDIYGLMTLETFTDPLPYLENYNEEEYSQQNYPICSEKLMFPSKIKLTKQQYLPADLQQFLGVLNNMRPYHDMVEKAKAYFISDLREEKKWFRFAGSSIWLPQFQCHYMVSRYLYSPNGVANHAFASFLYIQLFDSDWKELPSHTTLDIPFEQTEANSIFKIFKPKQKYANFRNSTYPQILPIPFDYKLPIETKKYYYGPEDPRILLRSNPLGFDEPLIVFNMKGLKLTKRVMYSYLPFSNTLKLLKKRREPFANIEKNWTPFKSVAQPSKTQTTIHFIYSMIPLEVLACDIDSGLCDILQKPAKHDFNYVGGLRGGTQLVSLPLNETIPSEIRAKLPIPKNRQVYIGWARTHLNNCGCGDSMYRPNFITLVEDYDDVTDKYYYKIGDISGYFDFAAKIEPWSKQVLDEEGNLYEKAEQCQGRNVLIPNSIAYWDVGSIKLAGTEYQKHDFKDMFSSGKVSDFNANEIVFNDYMGVTLSSADRDVSIVHVKGLLNYILQLPSLVDDSLVINKEWTFQKKGHDLNVRCAMIASKEYCKSYAIKQGVKIDEKSEET.

At 1–19 (MKLEMSSYLHKVPNTGITN) the chain is on the cytoplasmic side. The helical transmembrane segment at 20–42 (LSNSKSIVFIMFCATLLFIITSS) threads the bilayer. The Extracellular segment spans residues 43-651 (RYLTGSESLG…VKIDEKSEET (609 aa)). N-linked (GlcNAc...) asparagine glycans are attached at residues Asn271 and Asn423.

This sequence belongs to the BMT family.

It is found in the membrane. In terms of biological role, beta-mannosyltransferase involved in cell wall biosynthesis through beta-1,2-mannosylation of cell wall phosphopeptidomannan. The sequence is that of Beta-mannosyltransferase 7 (BMT7) from Candida albicans (strain SC5314 / ATCC MYA-2876) (Yeast).